The following is a 436-amino-acid chain: Cytochrome P450 monooxygenase phqO (436 aa).

Cysteine 377 lines the heme pocket.

This sequence belongs to the cytochrome P450 family. The cofactor is heme.

It functions in the pathway alkaloid biosynthesis. Cytochrome P450 monooxygenase; part of the gene cluster that mediates the biosynthesis of paraherquamide, a fungal indole alkaloid that belongs to a family of natural products containing a characteristic bicyclo[2.2.2]diazaoctane core. The first steps in the biosynthesis of paraherquamide is the production of the beta-methyl-proline precursor from L-isoleucine. They require oxidation of a terminally hydroxylated L-isoleucine to the corresponding aldehyde by enzymes which have still to be identified. Spontaneous cyclization and dehydration would yield the 4-methyl pyrolline-5-carboxylic acid, which is then reduced by the pyrroline-5-carboxylate reductase phqD leading to the beta-methyl-proline precursor. The next step of paraherquamide biosynthesis involves coupling of beta-methyl-proline and L-tryptophan by the bimodular NRPS phqB, to produce a monooxopiperazine intermediate. The reductase (R) domain of phqB utilizes NADPH for hydride transfer to reduce the thioester bond of the T domain-tethered linear dipeptide to a hemithioaminal intermediate, which spontaneously cleaves the C-S bond to release the aldehyde product. This compound undergoes spontaneous cyclization and dehydration to give a dienamine which is reverse prenylated at C-2 by the reverse prenyltransferase phqJ. The other prenyltransferase present in the cluster, phqI may be a redundant gene in the pathway. During biosynthetic assembly, the key step to produce the polycyclic core is catalyzed by the bifunctional reductase and intramolecular [4+2] Diels-Alderase, phqE, resulting in formation of the [2.2.2] diazaoctane intermediate preparaherquamide. Following formation of preparaherquamide, an indole 2,3-epoxidation-initiated pinacol-like rearrangement is catalyzed by the phqK FAD-dependent monooxygenase. The prenyltransferase phqA, the cytochrome P450 monooxygenase phqL, and the FAD-linked oxidoreductase phqH (or the cytochrome P450 monooxygenase phqM), are proposed to be involved in the formation of the pyran ring. The FAD-dependent monooxygenase phqK is likely responsible for generation of the spiro-oxindole, and the N-methylation is likely mediated by the phqN methyltransferase leading to the isolable natural product paraherquamide F. However, the order of these biosynthetic steps has still to be determined. In late-stage paraherquamide biosynthesis, the third P450 monooxygenase, phqO, is probably responsible for the C-14 hydroxylation, transforming paraherquamide F to paraherquamide G, and paraherquamide E to the final product paraherquamide A. The expansion from the 6-membered ring pyran (in paraherquamides F and G) to the 7-membered dioxepin ring (in paraherquamides A and E) represents a poorly understood but intriguing process that probably involves the 2-oxoglutarate-dependent dioxygenase phqC. Finally, the remaining members of the paraherquamide cluster, including phqI as well as phqM (or phqH), do not have a clearly prescribed role and appear to be redundant. The protein is Cytochrome P450 monooxygenase phqO of Penicillium fellutanum.